The following is a 241-amino-acid chain: Carboxy-S-adenosyl-L-methionine synthase (241 aa).

Residues Y38, 63–65 (GCS), 88–89 (DN), 116–117 (DI), N131, and R198 each bind S-adenosyl-L-methionine.

It belongs to the class I-like SAM-binding methyltransferase superfamily. Cx-SAM synthase family. As to quaternary structure, homodimer.

It catalyses the reaction prephenate + S-adenosyl-L-methionine = carboxy-S-adenosyl-L-methionine + 3-phenylpyruvate + H2O. Catalyzes the conversion of S-adenosyl-L-methionine (SAM) to carboxy-S-adenosyl-L-methionine (Cx-SAM). The chain is Carboxy-S-adenosyl-L-methionine synthase from Actinobacillus pleuropneumoniae serotype 7 (strain AP76).